The chain runs to 361 residues: D-alanine--D-alanine ligase (361 aa).

The ATP-grasp domain occupies 144-350 (KLAAADAGLA…FMELTDRLIR (207 aa)). 177–232 (VASLSFPMFVKPVSLGSSVGITKVNSESELAEAITHACSLDSKVLIEQAVKGREVE) serves as a coordination point for ATP. Residues Asp303, Glu317, and Asn319 each coordinate Mg(2+).

The protein belongs to the D-alanine--D-alanine ligase family. It depends on Mg(2+) as a cofactor. Mn(2+) serves as cofactor.

Its subcellular location is the cytoplasm. It catalyses the reaction 2 D-alanine + ATP = D-alanyl-D-alanine + ADP + phosphate + H(+). The protein operates within cell wall biogenesis; peptidoglycan biosynthesis. Its function is as follows. Cell wall formation. This is D-alanine--D-alanine ligase from Chlorobium luteolum (strain DSM 273 / BCRC 81028 / 2530) (Pelodictyon luteolum).